The following is a 292-amino-acid chain: THO complex subunit 4B (292 aa).

The interval 1-50 (MSGGLDMSLDDIIKSNRKPTGSRGRGGIGGGNNTGGRGGSGSNSGPSRRF) is disordered. Ser2 is modified (N-acetylserine). Positions 23–42 (RGRGGIGGGNNTGGRGGSGS) are enriched in gly residues. An RRM domain is found at 108–185 (TKLYISNLDY…KLMKIEIVGT (78 aa)). The segment covering 241 to 252 (GGGFGGGNFRGG) has biased composition (gly residues). Residues 241–292 (GGGFGGGNFRGGRGARGRGGRGSGGRGRDENVSAEDLDAELDKYHKEAMETS) form a disordered region. The span at 280 to 292 (ELDKYHKEAMETS) shows a compositional bias: basic and acidic residues.

This sequence belongs to the ALYREF family. Interacts with RH15 and RH56.

It is found in the nucleus. The protein resides in the nucleoplasm. Functionally, export adapter involved in nuclear export of spliced and unspliced mRNA. The chain is THO complex subunit 4B (ALY2) from Arabidopsis thaliana (Mouse-ear cress).